Here is a 1696-residue protein sequence, read N- to C-terminus: PH domain leucine-rich repeat protein phosphatase 1 (1696 aa).

Methionine 1 carries the post-translational modification N-acetylmethionine. 2 disordered regions span residues 1–97 (MEPA…GGGA) and 222–398 (LGHG…VVGE). The span at 79-92 (VPQPAAGGAAPVTA) shows a compositional bias: low complexity. Positions 313–325 (DTESFSLSPSAES) are enriched in polar residues. Phosphoserine is present on serine 378. Positions 499-599 (RIQLSGMYNV…WLRQVSKVAS (101 aa)) constitute a PH domain. LRR repeat units follow at residues 601 to 622 (RISSVDLSCCSLEHLPANLFYS), 624 to 645 (DLTHLNLKQNFLRQNPSLPAAR), 655 to 676 (KLKSLNLSNNHLGAFPSAVCSI), 678 to 699 (TLAELNVSCNALQEVPAAVGAM), 701 to 722 (NLQTFLLDGNFLQSLPAELENM), 724 to 746 (QLSYLGLSFNEFTDIPEVLEKLT), 836 to 857 (FLKALYASSNELVQLDVYPVPN), 858 to 879 (YLSYMDVSRNCLESVPEWVCES), 881 to 902 (KLEVLDIGHNQICELPARLFCN), 904 to 925 (SLRKLLAGHNRLARLPERLERT), 926 to 947 (SVEVLDVQHNQIIELPPNLLMK), 950 to 971 (SLRFLNASANKLETLPPATLSE), 976 to 996 (ILQELYLTNNSLTDKCVPLLT), 1000 to 1021 (RLKILHMAYNRLQSFPASKMAK), 1024 to 1045 (ELEEIDISGNKLKAIPTTIMNC), 1047 to 1068 (RMHTVIAHSNCIEVFPEVMQLP), 1069 to 1090 (EVKCVDLSCNELSEITLPENLP), and 1092 to 1113 (KLQELDLTGNPRLALDHKSLEL). Residues 1138–1385 (SHGYTEASGV…DSISAVVVQL (248 aa)) enclose the PPM-type phosphatase domain. Residues aspartate 1173, glycine 1174, lysine 1337, and aspartate 1376 each coordinate Mn(2+). Disordered stretches follow at residues 1422-1473 (RPSD…SPAY) and 1610-1696 (KPGG…DTPL). Composition is skewed to low complexity over residues 1431-1452 (SSSSGMASEISSELSTSEMSSE), 1647-1660 (QQQQQQQQQQQQQQ), and 1670-1680 (QAQAQAQAQAQ). Positions 1694 to 1696 (TPL) match the PDZ-binding motif.

Interacts with the nucleotide free form of K-Ras (KRAS) via its LRR repeats. Interacts with AKT2, AKT3 and PRKCB isoform beta-II. Interacts with WDR48 and USP12. Requires Mn(2+) as cofactor. Mainly present in brain (at protein level). Isoform 2 is more abundant in adult brain neurons than isoform 1 in. Isoforms 1 and 2 are expressed in the retina but not found in rod outer segments.

It is found in the cytoplasm. The protein localises to the membrane. It localises to the cell membrane. The protein resides in the nucleus. Its subcellular location is the nucleoplasm. It is found in the nucleus membrane. It carries out the reaction O-phospho-L-seryl-[protein] + H2O = L-seryl-[protein] + phosphate. It catalyses the reaction O-phospho-L-threonyl-[protein] + H2O = L-threonyl-[protein] + phosphate. With respect to regulation, insensitive to okadaic acid. Deubiquitination by WDR48-USP12 complex positively regulates PHLPP1 stability. Protein phosphatase involved in regulation of Akt and PKC signaling. Mediates dephosphorylation in the C-terminal domain hydrophobic motif of members of the AGC Ser/Thr protein kinase family; specifically acts on 'Ser-473' of AKT2 and AKT3, 'Ser-660' of PRKCB and 'Ser-657' of PRKCA. Isoform 2 seems to have a major role in regulating Akt signaling in hippocampal neurons while isoform 1 may promote Akt and PKC activation and inhibit ERK signaling. Akt regulates the balance between cell survival and apoptosis through a cascade that primarily alters the function of transcription factors that regulate pro- and antiapoptotic genes. Dephosphorylation of 'Ser-473' of Akt triggers apoptosis and suppression of tumor growth. Dephosphorylation of PRKCA and PRKCB leads to their destabilization and degradation. Dephosphorylates STK4 on 'Thr-387' leading to STK4 activation and apoptosis. Dephosphorylates RPS6KB1 and is involved in regulation of cap-dependent translation. Inhibits cancer cell proliferation and may act as a tumor suppressor. Dephosphorylates RAF1 inhibiting its kinase activity. May act as a negative regulator of K-Ras signaling in membrane rafts. Involved in the hippocampus-dependent long-term memory formation. Involved in circadian control by regulating the consolidation of circadian periodicity after resetting. Involved in development and function of regulatory T-cells. The sequence is that of PH domain leucine-rich repeat protein phosphatase 1 (Phlpp1) from Rattus norvegicus (Rat).